We begin with the raw amino-acid sequence, 405 residues long: Potassium channel subfamily K member 13 (405 aa).

At 1 to 19 (MAGRGCSCSPGHLNEDNAR) the chain is on the cytoplasmic side. Residues 20 to 40 (FLLLAGLILLYLLGGAAVFSA) form a helical membrane-spanning segment. Asn59 and Asn65 each carry an N-linked (GlcNAc...) asparagine glycan. Positions 95 to 115 (WDFTGAFYFVGTVVTTIGFGM) form an intramembrane region, pore-forming. 3 residues coordinate K(+): Thr110, Ile111, and Gly112. A selectivity filter 1 region spans residues 110 to 115 (TIGFGM). Residues 125 to 145 (VFLIFYGLIGCASTILFFNLF) traverse the membrane as a helical segment. Residues 146–193 (LERLITVIAYVMRTCHHQQLRRRGTVARDNRKAPRKGEADSLAGWKPS) lie on the Cytoplasmic side of the membrane. Residues 194-214 (VYYVMLILCLASVAISCGASA) form a helical membrane-spanning segment. Positions 224–244 (YFDSVYFCFVASSTIGFGDLV) form an intramembrane region, pore-forming. Positions 237, 238, 239, and 240 each coordinate K(+). The segment at 237-242 (TIGFGD) is selectivity filter 2. Residues 263 to 283 (FFILMGVCCIYSMFNVISILI) form a helical membrane-spanning segment. Residues 284–405 (KQTVNWILRK…NRLAETSGDR (122 aa)) are Cytoplasmic-facing.

Belongs to the two pore domain potassium channel (TC 1.A.1.8) family. As to quaternary structure, homodimer. Heterodimer with KCNK12. As to expression, ubiquitous. In brain expression is rather low and restricted to the olfactory bulb and tubercle, to the ventromedial hypothalamic nucleus, lateral septal nucleus dorsal, lateral mammillary nucleus, lateral parabrachial nuclei, reticular nucleus and reunions nuclei.

It localises to the cell membrane. The enzyme catalyses K(+)(in) = K(+)(out). The channel currents are activated by arachidonic acid, inhibited by volatile anesthetic halothane, partially inhibited by Ba(2+) ions and only weakly inhibited by extracellular acidification to pH 6. Functionally, k(+) channel that conducts outward rectifying tonic currents potentiated by purinergic signals. Homo- and heterodimerizes to form functional channels with distinct regulatory and gating properties. Contributes most of K(+) currents at the plasma membrane of resting microglia. Maintains a depolarized membrane potential required for proper ramified microglia morphology and phagocytosis, selectively mediating microglial pruning of presynaptic compartments at hippocampal excitatory synapses. Upon local release of ATP caused by neuronal injury or infection, it is potentiated by P2RY12 and P2RX7 receptor signaling and contributes to ATP-triggered K(+) efflux underlying microglial NLRP3 inflammasome assembly and IL1B release. This chain is Potassium channel subfamily K member 13, found in Rattus norvegicus (Rat).